The chain runs to 229 residues: Potassium/proton antiporter CemA (229 aa).

2 helical membrane-spanning segments follow: residues 114-134 (IIYF…LIIL) and 189-209 (IISG…KYWI).

Belongs to the CemA family.

It localises to the plastid. The protein localises to the chloroplast inner membrane. It carries out the reaction K(+)(in) + H(+)(out) = K(+)(out) + H(+)(in). Its function is as follows. Contributes to K(+)/H(+) antiport activity by supporting proton efflux to control proton extrusion and homeostasis in chloroplasts in a light-dependent manner to modulate photosynthesis. Prevents excessive induction of non-photochemical quenching (NPQ) under continuous-light conditions. Indirectly promotes efficient inorganic carbon uptake into chloroplasts. The chain is Potassium/proton antiporter CemA from Lotus japonicus (Lotus corniculatus var. japonicus).